The primary structure comprises 194 residues: ATP-dependent Clp protease proteolytic subunit (194 aa).

S98 acts as the Nucleophile in catalysis. The active site involves H123.

It belongs to the peptidase S14 family. Fourteen ClpP subunits assemble into 2 heptameric rings which stack back to back to give a disk-like structure with a central cavity, resembling the structure of eukaryotic proteasomes.

It is found in the cytoplasm. It catalyses the reaction Hydrolysis of proteins to small peptides in the presence of ATP and magnesium. alpha-casein is the usual test substrate. In the absence of ATP, only oligopeptides shorter than five residues are hydrolyzed (such as succinyl-Leu-Tyr-|-NHMec, and Leu-Tyr-Leu-|-Tyr-Trp, in which cleavage of the -Tyr-|-Leu- and -Tyr-|-Trp bonds also occurs).. In terms of biological role, cleaves peptides in various proteins in a process that requires ATP hydrolysis. Has a chymotrypsin-like activity. Plays a major role in the degradation of misfolded proteins. In Acetivibrio thermocellus (strain ATCC 27405 / DSM 1237 / JCM 9322 / NBRC 103400 / NCIMB 10682 / NRRL B-4536 / VPI 7372) (Clostridium thermocellum), this protein is ATP-dependent Clp protease proteolytic subunit.